The primary structure comprises 218 residues: MKFFVDTADIKDIRELNDLGLLDGVTTNPSLILKSGGKIADVTKQICDIVQGPVSAEVVATEYKDMMAEAEVLAKIAPNVCIKVPLTLDGLKACKTIRTQMNRMVNVTLCFSANQALLAAKAGASFISPFVGRIDDTGSDGMELIQEIRQIYDNYDYQTEILTASVRTVNHVKQAALIGADVITAPPATLKALVNHPLTDKGLAAFLADWAKTGQKIG.

Lys83 acts as the Schiff-base intermediate with substrate in catalysis.

The protein belongs to the transaldolase family. Type 3B subfamily.

The protein resides in the cytoplasm. It carries out the reaction D-sedoheptulose 7-phosphate + D-glyceraldehyde 3-phosphate = D-erythrose 4-phosphate + beta-D-fructose 6-phosphate. It functions in the pathway carbohydrate degradation; pentose phosphate pathway; D-glyceraldehyde 3-phosphate and beta-D-fructose 6-phosphate from D-ribose 5-phosphate and D-xylulose 5-phosphate (non-oxidative stage): step 2/3. Functionally, transaldolase is important for the balance of metabolites in the pentose-phosphate pathway. This Mesorhizobium japonicum (strain LMG 29417 / CECT 9101 / MAFF 303099) (Mesorhizobium loti (strain MAFF 303099)) protein is Probable transaldolase (tal).